The chain runs to 125 residues: Histone H1-like protein Hc1 (125 aa).

Residues 98-125 form a disordered region; the sequence is TKAKVKPTKKAAPKTKVKTAKKTRSTKK. Basic residues predominate over residues 100–125; sequence AKVKPTKKAAPKTKVKTAKKTRSTKK.

This sequence belongs to the histone H1/H5 family. HCT subfamily.

Its function is as follows. Might have a role analogous to that of eukaryotic histone proteins. This Chlamydia trachomatis serovar L2 (strain ATCC VR-902B / DSM 19102 / 434/Bu) protein is Histone H1-like protein Hc1 (hctA).